The chain runs to 237 residues: Protein XpsM (237 aa).

Residues 1–21 (MPAATWTASPSPPNWPVPMPR) are disordered. Over residues 10 to 21 (PSPPNWPVPMPR) the composition is skewed to pro residues.

This is Protein XpsM (xpsM) from Xanthomonas campestris pv. campestris (strain ATCC 33913 / DSM 3586 / NCPPB 528 / LMG 568 / P 25).